The primary structure comprises 274 residues: tRNA pseudouridine synthase A (274 aa).

The active-site Nucleophile is the Asp-57. Tyr-115 contributes to the substrate binding site.

It belongs to the tRNA pseudouridine synthase TruA family. Homodimer.

The catalysed reaction is uridine(38/39/40) in tRNA = pseudouridine(38/39/40) in tRNA. Its function is as follows. Formation of pseudouridine at positions 38, 39 and 40 in the anticodon stem and loop of transfer RNAs. The protein is tRNA pseudouridine synthase A of Frankia casuarinae (strain DSM 45818 / CECT 9043 / HFP020203 / CcI3).